Consider the following 103-residue polypeptide: Small ribosomal subunit protein uS10 (103 aa).

Belongs to the universal ribosomal protein uS10 family. In terms of assembly, part of the 30S ribosomal subunit.

Its function is as follows. Involved in the binding of tRNA to the ribosomes. The polypeptide is Small ribosomal subunit protein uS10 (Methylibium petroleiphilum (strain ATCC BAA-1232 / LMG 22953 / PM1)).